The primary structure comprises 362 residues: GDSL esterase/lipase At5g45670 (362 aa).

An N-terminal signal peptide occupies residues 1–23 (MARMSLMIMMIMVAVTMINIAKS). The Nucleophile role is filled by Ser36. Catalysis depends on residues Asp326 and His329.

It belongs to the 'GDSL' lipolytic enzyme family.

It localises to the secreted. The chain is GDSL esterase/lipase At5g45670 from Arabidopsis thaliana (Mouse-ear cress).